We begin with the raw amino-acid sequence, 377 residues long: Nitric oxide reductase FlRd-NAD(+) reductase (377 aa).

Belongs to the FAD-dependent oxidoreductase family. FAD is required as a cofactor.

It is found in the cytoplasm. It catalyses the reaction 2 reduced [nitric oxide reductase rubredoxin domain] + NAD(+) + H(+) = 2 oxidized [nitric oxide reductase rubredoxin domain] + NADH. Its pathway is nitrogen metabolism; nitric oxide reduction. Its function is as follows. One of at least two accessory proteins for anaerobic nitric oxide (NO) reductase. Reduces the rubredoxin moiety of NO reductase. This Escherichia coli O81 (strain ED1a) protein is Nitric oxide reductase FlRd-NAD(+) reductase.